Here is a 369-residue protein sequence, read N- to C-terminus: Small ribosomal subunit biogenesis GTPase RsgA (369 aa).

Residues arginine 88 to proline 246 form the CP-type G domain. GTP-binding positions include asparagine 137 to aspartate 140 and glycine 188 to serine 196. Positions 271, 276, 278, and 284 each coordinate Zn(2+). The tract at residues glutamine 307–glutamate 369 is disordered. Over residues threonine 359–glutamate 369 the composition is skewed to acidic residues.

This sequence belongs to the TRAFAC class YlqF/YawG GTPase family. RsgA subfamily. In terms of assembly, monomer. Associates with 30S ribosomal subunit, binds 16S rRNA. It depends on Zn(2+) as a cofactor.

It is found in the cytoplasm. Its function is as follows. One of several proteins that assist in the late maturation steps of the functional core of the 30S ribosomal subunit. Helps release RbfA from mature subunits. May play a role in the assembly of ribosomal proteins into the subunit. Circularly permuted GTPase that catalyzes slow GTP hydrolysis, GTPase activity is stimulated by the 30S ribosomal subunit. This is Small ribosomal subunit biogenesis GTPase RsgA from Synechocystis sp. (strain ATCC 27184 / PCC 6803 / Kazusa).